A 210-amino-acid polypeptide reads, in one-letter code: Scoloptoxin SSD976 (210 aa).

The signal sequence occupies residues Met-1–Gly-23.

Post-translationally, contains 3 disulfide bonds. In terms of tissue distribution, expressed by the venom gland.

Its subcellular location is the secreted. Its function is as follows. Voltage-gated calcium channel inhibitor. The sequence is that of Scoloptoxin SSD976 from Scolopendra dehaani (Thai centipede).